The chain runs to 424 residues: Dihydroorotase (424 aa).

Zn(2+)-binding residues include histidine 61 and histidine 63. Residues 63-65 (HLR) and asparagine 95 each bind substrate. Zn(2+) contacts are provided by aspartate 153, histidine 180, and histidine 233. Position 279 (asparagine 279) interacts with substrate. Residue aspartate 306 participates in Zn(2+) binding. Residue aspartate 306 is part of the active site. Substrate is bound at residue histidine 310.

It belongs to the metallo-dependent hydrolases superfamily. DHOase family. Class I DHOase subfamily. Zn(2+) serves as cofactor.

The catalysed reaction is (S)-dihydroorotate + H2O = N-carbamoyl-L-aspartate + H(+). The protein operates within pyrimidine metabolism; UMP biosynthesis via de novo pathway; (S)-dihydroorotate from bicarbonate: step 3/3. Catalyzes the reversible cyclization of carbamoyl aspartate to dihydroorotate. In Pelobacter propionicus (strain DSM 2379 / NBRC 103807 / OttBd1), this protein is Dihydroorotase.